A 328-amino-acid chain; its full sequence is Alanine racemase (328 aa).

Residue lysine 33 is the Proton acceptor; specific for D-alanine of the active site. Lysine 33 is subject to N6-(pyridoxal phosphate)lysine. Residue arginine 118 coordinates substrate. Tyrosine 237 acts as the Proton acceptor; specific for L-alanine in catalysis. Methionine 283 is a substrate binding site.

This sequence belongs to the alanine racemase family. Requires pyridoxal 5'-phosphate as cofactor.

The enzyme catalyses L-alanine = D-alanine. It participates in amino-acid biosynthesis; D-alanine biosynthesis; D-alanine from L-alanine: step 1/1. Functionally, catalyzes the interconversion of L-alanine and D-alanine. May also act on other amino acids. This Campylobacter jejuni subsp. jejuni serotype O:23/36 (strain 81-176) protein is Alanine racemase (alr).